We begin with the raw amino-acid sequence, 315 residues long: BTB/POZ domain-containing adapter for CUL3-mediated RhoA degradation protein 3 (315 aa).

The residue at position 1 (Met-1) is an N-acetylmethionine. Ser-23 is subject to Phosphoserine. The region spanning 32–100 is the BTB domain; it reads KYVKLNVGGA…LRDGAVPLPE (69 aa). The Interaction with PCNA motif lies at 239–245; sequence QTKVEFP. The disordered stretch occupies residues 269 to 294; it reads NALLEATGGAAGRSHHLDEDEERERE.

It belongs to the BACURD family. Homotetramer; forms a two-fold symmetric tetramer in solution. Interacts with CUL3; interaction is direct and forms a 5:5 heterodecamer. Component of the BCR(BACURD3) E3 ubiquitin ligase complex, at least composed of CUL3, KCTD10/BACURD3 and RBX1. Interacts with DNA polymerase delta subunit 2/POLD2. Interacts with PCNA. Expressed at highest levels in lung. Also detected in testis and heart. Very low expression, if any, in brain, liver, spleen, kidney and skeletal muscle.

It is found in the nucleus. It participates in protein modification; protein ubiquitination. Its function is as follows. Substrate-specific adapter of a BCR (BTB-CUL3-RBX1) E3 ubiquitin-protein ligase complex. The BCR(BACURD3) E3 ubiquitin ligase complex mediates the ubiquitination of target proteins, leading to their degradation by the proteasome. The protein is BTB/POZ domain-containing adapter for CUL3-mediated RhoA degradation protein 3 (Kctd10) of Rattus norvegicus (Rat).